A 530-amino-acid polypeptide reads, in one-letter code: Arginine--tRNA ligase (530 aa).

The short motif at 113 to 123 (ANPTGPLHIGH) is the 'HIGH' region element.

It belongs to the class-I aminoacyl-tRNA synthetase family. In terms of assembly, monomer.

The protein resides in the cytoplasm. It catalyses the reaction tRNA(Arg) + L-arginine + ATP = L-arginyl-tRNA(Arg) + AMP + diphosphate. This chain is Arginine--tRNA ligase, found in Campylobacter jejuni (strain RM1221).